The following is a 284-amino-acid chain: Pantothenate synthetase (284 aa).

Residue 30-37 (MGNLHEGH) coordinates ATP. His37 functions as the Proton donor in the catalytic mechanism. Gln61 serves as a coordination point for (R)-pantoate. Beta-alanine is bound at residue Gln61. ATP is bound at residue 149–152 (GEKD). Residue Gln155 coordinates (R)-pantoate. Residues Val178 and 186-189 (LSSR) contribute to the ATP site.

This sequence belongs to the pantothenate synthetase family. Homodimer.

It is found in the cytoplasm. It catalyses the reaction (R)-pantoate + beta-alanine + ATP = (R)-pantothenate + AMP + diphosphate + H(+). The protein operates within cofactor biosynthesis; (R)-pantothenate biosynthesis; (R)-pantothenate from (R)-pantoate and beta-alanine: step 1/1. In terms of biological role, catalyzes the condensation of pantoate with beta-alanine in an ATP-dependent reaction via a pantoyl-adenylate intermediate. This chain is Pantothenate synthetase, found in Yersinia pseudotuberculosis serotype O:1b (strain IP 31758).